The primary structure comprises 235 residues: uncharacterized protein (235 aa).

Residues isoleucine 2 to arginine 235 enclose the ABC transporter domain. An ATP-binding site is contributed by glycine 38–serine 45.

This sequence belongs to the ABC transporter superfamily.

This is an uncharacterized protein from Methanocaldococcus jannaschii (strain ATCC 43067 / DSM 2661 / JAL-1 / JCM 10045 / NBRC 100440) (Methanococcus jannaschii).